Here is a 470-residue protein sequence, read N- to C-terminus: uncharacterized protein (470 aa).

Positions 418 to 453 form a coiled coil; it reads SECCEEQEEKEKKKEKEKEKKKEKDDDDDQQNNNNN. The tract at residues 423-470 is disordered; that stretch reads EQEEKEKKKEKEKEKKKEKDDDDDQQNNNNNDQNGLGLGLGLNFGLNL. Over residues 426-441 the composition is skewed to basic and acidic residues; the sequence is EKEKKKEKEKEKKKEK. Residues 448–457 are compositionally biased toward low complexity; the sequence is QNNNNNDQNG.

This is an uncharacterized protein from Acidianus bottle-shaped virus (isolate Italy/Pozzuoli) (ABV).